A 102-amino-acid polypeptide reads, in one-letter code: P antigen family member 4 (102 aa).

The segment covering 1-10 (MSARVRSRSR) has biased composition (basic residues). A disordered region spans residues 1–102 (MSARVRSRSR…KTKEAGDGQP (102 aa)). Ser-7 carries the post-translational modification Phosphoserine; by CLK2. Ser-9 is subject to Phosphoserine; by HIPK1 and CLK2. Over residues 45 to 85 (GQEREGTPPIEERKVEGDCQEMDLEKTRSERGDGSDVKEKT) the composition is skewed to basic and acidic residues. The residue at position 51 (Thr-51) is a Phosphothreonine; by HIPK1 and CLK2. The residue at position 71 (Thr-71) is a Phosphothreonine; by CLK2. Residues Ser-73 and Ser-79 each carry the phosphoserine; by CLK2 modification. 2 positions are modified to phosphothreonine; by CLK2: Thr-85 and Thr-94.

The protein belongs to the GAGE family. Interacts with JUN. In terms of processing, HIPK1-mediated phosphorylation at Thr-51 leads to the compaction of its intrinsically disordered conformation and is critical for its ability to potentiate the transcriptional activator activity of JUN inspite of a reduced interaction with JUN. CLK2-mediated phosphorylation at multiple Ser and Thr residues attenuates its ability to potentiate JUN transcriptional activator activity. Expressed at basal lvels in the adult normal prostate gland but is highly up-regulated in the fetal prostate and prostate cancer cells. Preferentially expressed in normal male and female reproductive tissues, testis, fallopian tube, uterus, and placenta, as well as in testicular cancer, uterine cancer, cervical cancer and kidney cancer.

It localises to the cytoplasm. The protein localises to the nucleus. The protein resides in the mitochondrion. In terms of biological role, intrinsically disordered protein that potentiates the transcriptional activator activity of JUN. Protects cells from stress-induced apoptosis by inhibiting reactive oxygen species (ROS) production and via regulation of the MAPK signaling pathway. This chain is P antigen family member 4 (PAGE4), found in Homo sapiens (Human).